A 313-amino-acid chain; its full sequence is 4-hydroxy-3-methylbut-2-enyl diphosphate reductase (313 aa).

Position 12 (Cys-12) interacts with [4Fe-4S] cluster. Residues His-41 and His-74 each coordinate (2E)-4-hydroxy-3-methylbut-2-enyl diphosphate. Residues His-41 and His-74 each contribute to the dimethylallyl diphosphate site. His-41 and His-74 together coordinate isopentenyl diphosphate. Cys-96 serves as a coordination point for [4Fe-4S] cluster. His-124 contacts (2E)-4-hydroxy-3-methylbut-2-enyl diphosphate. His-124 lines the dimethylallyl diphosphate pocket. Position 124 (His-124) interacts with isopentenyl diphosphate. Glu-126 (proton donor) is an active-site residue. Thr-164 contacts (2E)-4-hydroxy-3-methylbut-2-enyl diphosphate. Cys-194 lines the [4Fe-4S] cluster pocket. (2E)-4-hydroxy-3-methylbut-2-enyl diphosphate-binding residues include Ser-222, Ser-223, Asn-224, and Ser-266. Positions 222, 223, 224, and 266 each coordinate dimethylallyl diphosphate. Isopentenyl diphosphate is bound by residues Ser-222, Ser-223, Asn-224, and Ser-266.

It belongs to the IspH family. The cofactor is [4Fe-4S] cluster.

It carries out the reaction isopentenyl diphosphate + 2 oxidized [2Fe-2S]-[ferredoxin] + H2O = (2E)-4-hydroxy-3-methylbut-2-enyl diphosphate + 2 reduced [2Fe-2S]-[ferredoxin] + 2 H(+). It catalyses the reaction dimethylallyl diphosphate + 2 oxidized [2Fe-2S]-[ferredoxin] + H2O = (2E)-4-hydroxy-3-methylbut-2-enyl diphosphate + 2 reduced [2Fe-2S]-[ferredoxin] + 2 H(+). Its pathway is isoprenoid biosynthesis; dimethylallyl diphosphate biosynthesis; dimethylallyl diphosphate from (2E)-4-hydroxy-3-methylbutenyl diphosphate: step 1/1. It functions in the pathway isoprenoid biosynthesis; isopentenyl diphosphate biosynthesis via DXP pathway; isopentenyl diphosphate from 1-deoxy-D-xylulose 5-phosphate: step 6/6. Functionally, catalyzes the conversion of 1-hydroxy-2-methyl-2-(E)-butenyl 4-diphosphate (HMBPP) into a mixture of isopentenyl diphosphate (IPP) and dimethylallyl diphosphate (DMAPP). Acts in the terminal step of the DOXP/MEP pathway for isoprenoid precursor biosynthesis. The protein is 4-hydroxy-3-methylbut-2-enyl diphosphate reductase of Protochlamydia amoebophila (strain UWE25).